The following is a 798-amino-acid chain: Probable serine/threonine-protein kinase DDB_G0276461 (798 aa).

The 271-residue stretch at 54 to 324 (VTEVKLVAEG…DLLNYLNEIR (271 aa)) folds into the Protein kinase domain. ATP contacts are provided by residues 60–68 (VAEGGFGFV) and K82. D185 acts as the Proton acceptor in catalysis. Disordered stretches follow at residues 330–538 (GLQT…NGNF), 553–645 (TNGS…SYNN), and 659–798 (SSAS…FGIL). 6 stretches are compositionally biased toward low complexity: residues 335 to 406 (SSNN…NTPN), 429 to 490 (SNSN…NNNN), 506 to 538 (PSPS…NGNF), 557 to 603 (TNFE…INNS), 611 to 642 (SSGS…NSGS), and 659 to 678 (SSAS…NSWN). The span at 679-697 (VTLTPSQSNKNSTGNLKPL) shows a compositional bias: polar residues. Residues 698-716 (NNNNNNNNNNNNRFANNTN) show a composition bias toward low complexity. A compositionally biased stretch (polar residues) spans 717–769 (SSRDYSFDFSSPNTSNNNDFGSFVQPSSSSSLNTTHFSKPNYNVNLNQTTSMT). Residues 770-790 (NNYNNNNYNNNNNSNNNNNNS) show a composition bias toward low complexity.

The protein belongs to the protein kinase superfamily. Ser/Thr protein kinase family.

The catalysed reaction is L-seryl-[protein] + ATP = O-phospho-L-seryl-[protein] + ADP + H(+). It catalyses the reaction L-threonyl-[protein] + ATP = O-phospho-L-threonyl-[protein] + ADP + H(+). The chain is Probable serine/threonine-protein kinase DDB_G0276461 from Dictyostelium discoideum (Social amoeba).